The sequence spans 338 residues: NADPH dehydrogenase (338 aa).

An FMN-binding site is contributed by 22–25 (SPMC). Tyr-27 provides a ligand contact to substrate. FMN is bound by residues Ala-59 and Gln-101. 163–166 (HAAH) is a binding site for substrate. FMN-binding positions include Arg-214 and 306-307 (GR).

It belongs to the NADH:flavin oxidoreductase/NADH oxidase family. NamA subfamily. As to quaternary structure, homotetramer. It depends on FMN as a cofactor.

It catalyses the reaction A + NADPH + H(+) = AH2 + NADP(+). Functionally, catalyzes the reduction of the double bond of an array of alpha,beta-unsaturated aldehydes and ketones. It also reduces the nitro group of nitroester and nitroaromatic compounds. It could have a role in detoxification processes. The polypeptide is NADPH dehydrogenase (Listeria welshimeri serovar 6b (strain ATCC 35897 / DSM 20650 / CCUG 15529 / CIP 8149 / NCTC 11857 / SLCC 5334 / V8)).